The following is a 593-amino-acid chain: Aspartate--tRNA(Asp/Asn) ligase (593 aa).

Glutamate 176 contacts L-aspartate. The aspartate stretch occupies residues 200–203; sequence QIFK. L-aspartate is bound at residue arginine 222. Residues 222 to 224 and glutamine 231 each bind ATP; that span reads RDE. Residue histidine 450 coordinates L-aspartate. Glutamate 490 is a binding site for ATP. Position 497 (arginine 497) interacts with L-aspartate. An ATP-binding site is contributed by 542-545; it reads GLDR.

It belongs to the class-II aminoacyl-tRNA synthetase family. Type 1 subfamily. As to quaternary structure, homodimer.

The protein resides in the cytoplasm. The catalysed reaction is tRNA(Asx) + L-aspartate + ATP = L-aspartyl-tRNA(Asx) + AMP + diphosphate. Functionally, aspartyl-tRNA synthetase with relaxed tRNA specificity since it is able to aspartylate not only its cognate tRNA(Asp) but also tRNA(Asn). Reaction proceeds in two steps: L-aspartate is first activated by ATP to form Asp-AMP and then transferred to the acceptor end of tRNA(Asp/Asn). This chain is Aspartate--tRNA(Asp/Asn) ligase, found in Symbiobacterium thermophilum (strain DSM 24528 / JCM 14929 / IAM 14863 / T).